A 418-amino-acid chain; its full sequence is Probable serine/threonine-protein kinase nek2 (418 aa).

A Protein kinase domain is found at 4 to 264 (YEILGALGKG…VNELLGYSFI (261 aa)). ATP is bound by residues 10–18 (LGKGSFGVV) and K33. D135 acts as the Proton acceptor in catalysis. Residues 278-363 (QGLKQMDEDL…SNLSLNCNNS (86 aa)) adopt a coiled-coil conformation.

This sequence belongs to the protein kinase superfamily. NEK Ser/Thr protein kinase family. NIMA subfamily.

It catalyses the reaction L-seryl-[protein] + ATP = O-phospho-L-seryl-[protein] + ADP + H(+). It carries out the reaction L-threonyl-[protein] + ATP = O-phospho-L-threonyl-[protein] + ADP + H(+). In terms of biological role, involved in centrosome biogenesis. Seems to be required for recruitment of centrosomal material and might be involved in de novo centrosome formation. The sequence is that of Probable serine/threonine-protein kinase nek2 (nek2) from Dictyostelium discoideum (Social amoeba).